The following is a 491-amino-acid chain: Glutamyl-tRNA(Gln) amidotransferase subunit A (491 aa).

Catalysis depends on charge relay system residues Lys78 and Ser158. The active-site Acyl-ester intermediate is the Ser182.

It belongs to the amidase family. GatA subfamily. In terms of assembly, heterotrimer of A, B and C subunits.

The enzyme catalyses L-glutamyl-tRNA(Gln) + L-glutamine + ATP + H2O = L-glutaminyl-tRNA(Gln) + L-glutamate + ADP + phosphate + H(+). Allows the formation of correctly charged Gln-tRNA(Gln) through the transamidation of misacylated Glu-tRNA(Gln) in organisms which lack glutaminyl-tRNA synthetase. The reaction takes place in the presence of glutamine and ATP through an activated gamma-phospho-Glu-tRNA(Gln). The polypeptide is Glutamyl-tRNA(Gln) amidotransferase subunit A (Bradyrhizobium sp. (strain ORS 278)).